The following is a 123-amino-acid chain: Probable non-functional immunoglobulin lambda variable 11-55 (123 aa).

The first 19 residues, 1–19 (MALTPLLLLLLSHCTGSLS), serve as a signal peptide directing secretion. Residues 20 to 44 (RPVLTQPPSLSASPGATARLPCTLS) form a framework-1 region. Residues 21–123 (PVLTQPPSLS…YCQVYESSAN (103 aa)) enclose the Ig-like domain. An intrachain disulfide couples C41 to C115. Positions 45–53 (SDLSVGGKN) are complementarity-determining-1. Positions 54–70 (MFWYQQKLGSSPRLFLY) are framework-2. The segment at 71 to 77 (HYSDSDK) is complementarity-determining-2. A framework-3 region spans residues 78–115 (QLGPGVPSRVSGSKETSSNTAFLLISGLQPEDEADYYC). The segment at 116 to 123 (QVYESSAN) is complementarity-determining-3.

Immunoglobulins are composed of two identical heavy chains and two identical light chains; disulfide-linked.

The protein resides in the secreted. The protein localises to the cell membrane. In terms of biological role, probable non-functional open reading frame (ORF) of V region of the variable domain of immunoglobulin light chains. Non-functional ORF generally cannot participate in the synthesis of a productive immunoglobulin chain due to altered V-(D)-J or switch recombination and/or splicing site (at mRNA level) and/or conserved amino acid change (protein level). Immunoglobulins, also known as antibodies, are membrane-bound or secreted glycoproteins produced by B lymphocytes. In the recognition phase of humoral immunity, the membrane-bound immunoglobulins serve as receptors which, upon binding of a specific antigen, trigger the clonal expansion and differentiation of B lymphocytes into immunoglobulins-secreting plasma cells. Secreted immunoglobulins mediate the effector phase of humoral immunity, which results in the elimination of bound antigens. The antigen binding site is formed by the variable domain of one heavy chain, together with that of its associated light chain. Thus, each immunoglobulin has two antigen binding sites with remarkable affinity for a particular antigen. The variable domains are assembled by a process called V-(D)-J rearrangement and can then be subjected to somatic hypermutations which, after exposure to antigen and selection, allow affinity maturation for a particular antigen. In Homo sapiens (Human), this protein is Probable non-functional immunoglobulin lambda variable 11-55.